Reading from the N-terminus, the 313-residue chain is Pyrimidine-specific ribonucleoside hydrolase RihB (313 aa).

Asp-11 functions as the Proton acceptor in the catalytic mechanism. Residues Asp-11, Asp-16, and Val-124 each coordinate Ca(2+). Residues Gln-227 and His-239 each contribute to the substrate site. Asp-240 is a Ca(2+) binding site.

Belongs to the IUNH family. RihB subfamily. Homotetramer. Ca(2+) serves as cofactor.

It catalyses the reaction a pyrimidine ribonucleoside + H2O = a pyrimidine nucleobase + D-ribose. Its function is as follows. Hydrolyzes cytidine or uridine to ribose and cytosine or uracil, respectively. Has a clear preference for cytidine over uridine. Strictly specific for ribonucleosides. This is Pyrimidine-specific ribonucleoside hydrolase RihB from Shigella sonnei (strain Ss046).